An 81-amino-acid polypeptide reads, in one-letter code: Photosystem I iron-sulfur center (81 aa).

4Fe-4S ferredoxin-type domains follow at residues 2-31 (SHSVKVYDTCIGCTQCVRACPTDVLEMIPW) and 39-68 (IASAPRTEDCVGCKRCESACPTDFLSVRVY). Positions 11, 14, 17, 21, 48, 51, 54, and 58 each coordinate [4Fe-4S] cluster.

In terms of assembly, the eukaryotic PSI reaction center is composed of at least 11 subunits. The cofactor is [4Fe-4S] cluster.

The protein localises to the plastid thylakoid membrane. It carries out the reaction reduced [plastocyanin] + hnu + oxidized [2Fe-2S]-[ferredoxin] = oxidized [plastocyanin] + reduced [2Fe-2S]-[ferredoxin]. Its function is as follows. Apoprotein for the two 4Fe-4S centers FA and FB of photosystem I (PSI); essential for photochemical activity. FB is the terminal electron acceptor of PSI, donating electrons to ferredoxin. The C-terminus interacts with PsaA/B/D and helps assemble the protein into the PSI complex. Required for binding of PsaD and PsaE to PSI. PSI is a plastocyanin-ferredoxin oxidoreductase, converting photonic excitation into a charge separation, which transfers an electron from the donor P700 chlorophyll pair to the spectroscopically characterized acceptors A0, A1, FX, FA and FB in turn. The chain is Photosystem I iron-sulfur center from Cuscuta obtusiflora (Peruvian dodder).